Here is a 377-residue protein sequence, read N- to C-terminus: Chaperone protein DnaJ (377 aa).

A J domain is found at 8-73 (CYYETLEVER…DKRAAYDRFG (66 aa)). Residues 135 to 213 (GKTAQIEIPV…CSGQGRVTRE (79 aa)) form a CR-type zinc finger. Positions 148, 151, 165, 168, 187, 190, 201, and 204 each coordinate Zn(2+). CXXCXGXG motif repeat units lie at residues 148–155 (CEACSGIG), 165–172 (CSTCGGAG), 187–194 (CPGCQGRG), and 201–208 (CPSCSGQG).

The protein belongs to the DnaJ family. Homodimer. Zn(2+) serves as cofactor.

It is found in the cytoplasm. In terms of biological role, participates actively in the response to hyperosmotic and heat shock by preventing the aggregation of stress-denatured proteins and by disaggregating proteins, also in an autonomous, DnaK-independent fashion. Unfolded proteins bind initially to DnaJ; upon interaction with the DnaJ-bound protein, DnaK hydrolyzes its bound ATP, resulting in the formation of a stable complex. GrpE releases ADP from DnaK; ATP binding to DnaK triggers the release of the substrate protein, thus completing the reaction cycle. Several rounds of ATP-dependent interactions between DnaJ, DnaK and GrpE are required for fully efficient folding. Also involved, together with DnaK and GrpE, in the DNA replication of plasmids through activation of initiation proteins. This chain is Chaperone protein DnaJ, found in Bradyrhizobium diazoefficiens (strain JCM 10833 / BCRC 13528 / IAM 13628 / NBRC 14792 / USDA 110).